Consider the following 600-residue polypeptide: Probable tripeptidyl-peptidase SED4 (600 aa).

A signal peptide spans 1 to 22 (MVSFTLRAIGACLIGLPALITA). Positions 23 to 202 (APTSHVSNDF…SVFTSDLEIT (180 aa)) are cleaved as a propeptide — removed in mature form. Residues N210 and N281 are each glycosylated (N-linked (GlcNAc...) asparagine). The Peptidase S53 domain maps to 212 to 600 (TITPDCIREL…FEKLSKLVLI (389 aa)). Catalysis depends on charge relay system residues E288 and D292. 2 N-linked (GlcNAc...) asparagine glycosylation sites follow: N323 and N404. S504 (charge relay system) is an active-site residue. Ca(2+) is bound by residues D546 and I547. N575 carries an N-linked (GlcNAc...) asparagine glycan. Ca(2+)-binding residues include G579 and D581.

Requires Ca(2+) as cofactor.

The protein resides in the secreted. It localises to the extracellular space. It catalyses the reaction Release of an N-terminal tripeptide from a polypeptide.. Secreted tripeptidyl-peptidase which degrades proteins at acidic pHs and is involved in virulence. This chain is Probable tripeptidyl-peptidase SED4 (SED4), found in Arthroderma benhamiae (strain ATCC MYA-4681 / CBS 112371) (Trichophyton mentagrophytes).